The sequence spans 176 residues: ATP-dependent protease subunit HslV (176 aa).

Thr-2 is a catalytic residue. Na(+) is bound by residues Ala-157, Cys-160, and Thr-163.

It belongs to the peptidase T1B family. HslV subfamily. As to quaternary structure, a double ring-shaped homohexamer of HslV is capped on each side by a ring-shaped HslU homohexamer. The assembly of the HslU/HslV complex is dependent on binding of ATP.

Its subcellular location is the cytoplasm. It catalyses the reaction ATP-dependent cleavage of peptide bonds with broad specificity.. Allosterically activated by HslU binding. Functionally, protease subunit of a proteasome-like degradation complex believed to be a general protein degrading machinery. The protein is ATP-dependent protease subunit HslV of Buchnera aphidicola subsp. Schizaphis graminum (strain Sg).